We begin with the raw amino-acid sequence, 218 residues long: Cytidylate kinase (218 aa).

10-18 serves as a coordination point for ATP; sequence GPAGSGKST.

It belongs to the cytidylate kinase family. Type 1 subfamily.

The protein resides in the cytoplasm. It carries out the reaction CMP + ATP = CDP + ADP. It catalyses the reaction dCMP + ATP = dCDP + ADP. This is Cytidylate kinase from Fusobacterium nucleatum subsp. nucleatum (strain ATCC 25586 / DSM 15643 / BCRC 10681 / CIP 101130 / JCM 8532 / KCTC 2640 / LMG 13131 / VPI 4355).